Reading from the N-terminus, the 45-residue chain is LVPCAWAGNVCGEKRAYCCSDPGRYCPWQVVCYESSEICSKKCGK.

4 cysteine pairs are disulfide-bonded: Cys4–Cys39, Cys11–Cys26, Cys18–Cys32, and Cys19–Cys43.

Monomer.

This is Pollen allergen Amb a 5 from Ambrosia artemisiifolia var. elatior (Short ragweed).